The following is a 401-amino-acid chain: Nicotinate phosphoribosyltransferase (401 aa).

Phosphohistidine; by autocatalysis is present on H224.

Belongs to the NAPRTase family. Transiently phosphorylated on a His residue during the reaction cycle. Phosphorylation strongly increases the affinity for substrates and increases the rate of nicotinate D-ribonucleotide production. Dephosphorylation regenerates the low-affinity form of the enzyme, leading to product release.

It catalyses the reaction nicotinate + 5-phospho-alpha-D-ribose 1-diphosphate + ATP + H2O = nicotinate beta-D-ribonucleotide + ADP + phosphate + diphosphate. Its pathway is cofactor biosynthesis; NAD(+) biosynthesis; nicotinate D-ribonucleotide from nicotinate: step 1/1. Catalyzes the synthesis of beta-nicotinate D-ribonucleotide from nicotinate and 5-phospho-D-ribose 1-phosphate at the expense of ATP. This chain is Nicotinate phosphoribosyltransferase, found in Pseudomonas putida (strain GB-1).